We begin with the raw amino-acid sequence, 382 residues long: Sphingosine 1-phosphate receptor 1 (382 aa).

Valine 2 is modified (N-acetylvaline). Residues 2–46 lie on the Extracellular side of the membrane; that stretch reads VSTSIPEVKALRSSVSDYGNYDIIVRHYNYTGKLNIGAEKDHGIK. An N6-acetyllysine modification is found at lysine 10. Asparagine 30 carries an N-linked (GlcNAc...) asparagine glycan. A helical membrane pass occupies residues 47–68; the sequence is LTSVVFILICCFIILENIFVLL. Residues 69 to 82 are Cytoplasmic-facing; sequence TIWKTKKFHRPMYY. Residues 83–104 form a helical membrane-spanning segment; that stretch reads FIGNLALSDLLAGVAYTANLLL. Over 105-116 the chain is Extracellular; the sequence is SGATTYKLTPAQ. The chain crosses the membrane as a helical span at residues 117-138; it reads WFLREGSMFVALSASVFSLLAI. 120–121 lines the sphing-4-enine 1-phosphate pocket; the sequence is RE. Over 139-160 the chain is Cytoplasmic; it reads AIERYITMLKMKLHNGSNSSRS. Residues 161–182 traverse the membrane as a helical segment; that stretch reads FLLISACWVISLILGGLPIMGW. Residues 183–196 lie on the Extracellular side of the membrane; sequence NCISSLSSCSTVLP. Cysteine 184 and cysteine 191 are disulfide-bonded. A helical transmembrane segment spans residues 197–224; the sequence is LYHKHYILFCTTVFTLLLLSIVILYCRI. Topologically, residues 225-257 are cytoplasmic; it reads YSLVRTRSRRLTFRKNISKASRSSEKSLALLKT. Threonine 236 carries the post-translational modification Phosphothreonine. The helical transmembrane segment at 258-278 threads the bilayer; that stretch reads VIIVLSVFIACWAPLFILLLL. Sphing-4-enine 1-phosphate is bound at residue 265-269; the sequence is FIACW. The Extracellular segment spans residues 279-289; that stretch reads DVGCKAKTCDI. Cysteine 282 and cysteine 287 are joined by a disulfide. Residues 290-310 traverse the membrane as a helical segment; sequence LYKAEYFLVLAVLNSGTNPII. At 311–382 the chain is on the cytoplasmic side; it reads YTLTNKEMRR…MSSGNVNSSS (72 aa). Cysteine 328 carries S-palmitoyl cysteine lipidation. Residues 348–382 are disordered; sequence MEFSRSKSDNSSHPQKDDGDNPETIMSSGNVNSSS. Serine 351 and serine 353 each carry phosphoserine. The segment covering 351-366 has biased composition (basic and acidic residues); sequence SRSKSDNSSHPQKDDG. Positions 371–382 are enriched in polar residues; sequence TIMSSGNVNSSS.

The protein belongs to the G-protein coupled receptor 1 family. As to quaternary structure, interacts with GNAI1 and GNAI3. Interacts with CD69; this interaction promotes S1PR1 degradation. Post-translationally, palmitoylated by ZDHHC5. Palmitoylation is required for targeting to plasma membrane, enabling G(i) coupling. Expressed in a wide variety of tissues with highest levels in brain, heart and spleen. Lower levels found in kidney, liver, lung, muscle, placenta, thymus, and uterus. Very low levels in intestine, stomach and testis. According to PubMed:9931453, expressed modestly in apparent endothelial cells surrounding some blood vessels (e.g. aortic trunk).

It localises to the cell membrane. Its subcellular location is the endosome. The protein localises to the membrane raft. G-protein coupled receptor for the bioactive lysosphingolipid sphingosine 1-phosphate (S1P) that seems to be coupled to the G(i) subclass of heteromeric G proteins. Signaling leads to the activation of RAC1, SRC, PTK2/FAK1 and MAP kinases. Plays an important role in cell migration, probably via its role in the reorganization of the actin cytoskeleton and the formation of lamellipodia in response to stimuli that increase the activity of the sphingosine kinase SPHK1. Required for normal chemotaxis toward sphingosine 1-phosphate. Required for normal embryonic heart development and normal cardiac morphogenesis. Plays an important role in the regulation of sprouting angiogenesis and vascular maturation. Inhibits sprouting angiogenesis to prevent excessive sprouting during blood vessel development. Required for normal egress of mature T-cells from the thymus into the blood stream and into peripheral lymphoid organs. Plays a role in the migration of osteoclast precursor cells, the regulation of bone mineralization and bone homeostasis. Plays a role in responses to oxidized 1-palmitoyl-2-arachidonoyl-sn-glycero-3-phosphocholine by pulmonary endothelial cells and in the protection against ventilator-induced lung injury. In Mus musculus (Mouse), this protein is Sphingosine 1-phosphate receptor 1.